Here is a 427-residue protein sequence, read N- to C-terminus: Histidine--tRNA ligase (427 aa).

It belongs to the class-II aminoacyl-tRNA synthetase family. Homodimer.

It is found in the cytoplasm. It catalyses the reaction tRNA(His) + L-histidine + ATP = L-histidyl-tRNA(His) + AMP + diphosphate + H(+). The polypeptide is Histidine--tRNA ligase (Chloroherpeton thalassium (strain ATCC 35110 / GB-78)).